The chain runs to 188 residues: dCTP deaminase (188 aa).

Residues 111-116 (KSTYAR), 135-137 (TLE), Q156, Y170, and Q180 each bind dCTP. E137 functions as the Proton donor/acceptor in the catalytic mechanism.

Belongs to the dCTP deaminase family. As to quaternary structure, homotrimer.

It catalyses the reaction dCTP + H2O + H(+) = dUTP + NH4(+). Its pathway is pyrimidine metabolism; dUMP biosynthesis; dUMP from dCTP (dUTP route): step 1/2. Functionally, catalyzes the deamination of dCTP to dUTP. This Marinobacter nauticus (strain ATCC 700491 / DSM 11845 / VT8) (Marinobacter aquaeolei) protein is dCTP deaminase.